Consider the following 74-residue polypeptide: MKRDIHPEYVETQVSCTCGASFTTRSTIDNGTIRADVCSECHPFYTGKQKILDTGGRVARFEARFGKAAGSASK.

Residues Cys16, Cys18, Cys38, and Cys41 each coordinate Zn(2+).

This sequence belongs to the bacterial ribosomal protein bL31 family. Type A subfamily. In terms of assembly, part of the 50S ribosomal subunit. It depends on Zn(2+) as a cofactor.

Binds the 23S rRNA. This is Large ribosomal subunit protein bL31 from Streptomyces griseus subsp. griseus (strain JCM 4626 / CBS 651.72 / NBRC 13350 / KCC S-0626 / ISP 5235).